Reading from the N-terminus, the 210-residue chain is MRLIVGLGNPGARYARNRHNIGFMAVDEIARVHRAAPFRRRFQGEAAEVMLGSERAILLKPQTFMNESGRSVGEAQRFFKIPLADVIVLHDELDLAPAKLRVKLGGGNAGHNGLRSITALCGNEYRRVRLGIGHPGDKALVHAYVLNDFAKSEEPWVEDLCRATADHAPLLAAGEDASFQNKVHLAMAGRGWETVKTPAEAGKAKARDAN.

Tyrosine 14 serves as a coordination point for tRNA. The active-site Proton acceptor is the histidine 19. TRNA is bound by residues phenylalanine 64, asparagine 66, and asparagine 112.

It belongs to the PTH family. In terms of assembly, monomer.

The protein resides in the cytoplasm. The catalysed reaction is an N-acyl-L-alpha-aminoacyl-tRNA + H2O = an N-acyl-L-amino acid + a tRNA + H(+). Hydrolyzes ribosome-free peptidyl-tRNAs (with 1 or more amino acids incorporated), which drop off the ribosome during protein synthesis, or as a result of ribosome stalling. In terms of biological role, catalyzes the release of premature peptidyl moieties from peptidyl-tRNA molecules trapped in stalled 50S ribosomal subunits, and thus maintains levels of free tRNAs and 50S ribosomes. This is Peptidyl-tRNA hydrolase from Methylorubrum extorquens (strain CM4 / NCIMB 13688) (Methylobacterium extorquens).